A 211-amino-acid polypeptide reads, in one-letter code: Pyridoxine/pyridoxamine 5'-phosphate oxidase (211 aa).

Residues 7 to 10 (RREY) and Lys-65 each bind substrate. FMN contacts are provided by residues 60 to 65 (RIVLLK), 75 to 76 (YT), Arg-81, Lys-82, and Gln-104. 3 residues coordinate substrate: Tyr-122, Arg-126, and Ser-130. Residues 139-140 (QS) and Trp-184 each bind FMN. 190–192 (RLH) lines the substrate pocket. Arg-194 is an FMN binding site.

The protein belongs to the pyridoxamine 5'-phosphate oxidase family. Homodimer. The cofactor is FMN.

The enzyme catalyses pyridoxamine 5'-phosphate + O2 + H2O = pyridoxal 5'-phosphate + H2O2 + NH4(+). It carries out the reaction pyridoxine 5'-phosphate + O2 = pyridoxal 5'-phosphate + H2O2. It functions in the pathway cofactor metabolism; pyridoxal 5'-phosphate salvage; pyridoxal 5'-phosphate from pyridoxamine 5'-phosphate: step 1/1. Its pathway is cofactor metabolism; pyridoxal 5'-phosphate salvage; pyridoxal 5'-phosphate from pyridoxine 5'-phosphate: step 1/1. Its function is as follows. Catalyzes the oxidation of either pyridoxine 5'-phosphate (PNP) or pyridoxamine 5'-phosphate (PMP) into pyridoxal 5'-phosphate (PLP). The chain is Pyridoxine/pyridoxamine 5'-phosphate oxidase from Photobacterium profundum (strain SS9).